An 844-amino-acid chain; its full sequence is Meiosis-specific protein PAIR3 (844 aa).

Disordered stretches follow at residues 41 to 389 (TSSV…RERR), 418 to 506 (KLSS…RFSD), 532 to 604 (DDLF…QISI), and 616 to 669 (WLSD…EPEK). The span at 106–120 (QPDDNAIEQTGTFSF) shows a compositional bias: polar residues. 2 stretches are compositionally biased toward basic and acidic residues: residues 122–134 (TRREQDSHLDQLD) and 145–164 (RQVESADKNKPNSEMLRMKL). Polar residues-rich tracts occupy residues 191-208 (QPKSQIANGPSSGRQKVF) and 218-229 (TPAQFNSQTANK). Composition is skewed to basic and acidic residues over residues 256 to 270 (RKKEPTGSTHQDKSG) and 324 to 363 (AKVEPKKAHCSDRISHKTTQDDMERKVPSKYIPSEKKGEK). 2 stretches are compositionally biased toward polar residues: residues 364–382 (TNSFSSLSRTGKTAESCSR) and 420–440 (SSPQLTSFKSKGKCSSISPQQ). Residues 441-456 (KENDNTHIPEASDRTA) are compositionally biased toward basic and acidic residues. Over residues 459-473 (NSFNSTPSPAANPSP) the composition is skewed to low complexity. Positions 545–554 (RSRSTSFTSD) are enriched in polar residues. Basic and acidic residues predominate over residues 616–640 (WLSDVDSPDKSSIEHLGRKSHLKEG). Residues 646-661 (QLTSPTHFATSGTQET) are compositionally biased toward polar residues. Residues 731-765 (VNAGKSKRKRLESTFEEQQEKLRILHEKFKEEVNQ) are a coiled coil.

In terms of tissue distribution, expressed in pollen mother cells and the ovule tissues during meiosis.

The protein localises to the chromosome. Its subcellular location is the nucleus. Its function is as follows. Plays a crucial role in homologous chromosome pairing and synapsis in meiosis. Does not seem required for cytokinesis. Is essential for meiotic bouquet formation, homologous chromosome pairing and normal recombination, and synaptonemal complex (SC) assembly. Required for the proper association of PAIR2 with chromosomes. The chain is Meiosis-specific protein PAIR3 from Oryza sativa subsp. japonica (Rice).